The primary structure comprises 359 residues: Peptide chain release factor 1 (359 aa).

The residue at position 235 (glutamine 235) is an N5-methylglutamine. A disordered region spans residues 283–309 (QKAESERSQARRSQVGSGDRSERIRTY).

The protein belongs to the prokaryotic/mitochondrial release factor family. In terms of processing, methylated by PrmC. Methylation increases the termination efficiency of RF1.

The protein localises to the cytoplasm. Its function is as follows. Peptide chain release factor 1 directs the termination of translation in response to the peptide chain termination codons UAG and UAA. This is Peptide chain release factor 1 from Brucella canis (strain ATCC 23365 / NCTC 10854 / RM-666).